A 299-amino-acid polypeptide reads, in one-letter code: Nucleotide-binding protein SCO1952 (299 aa).

23-30 (GMSGAGRS) provides a ligand contact to ATP. 74–77 (DVRG) contributes to the GTP binding site.

It belongs to the RapZ-like family.

Its function is as follows. Displays ATPase and GTPase activities. The sequence is that of Nucleotide-binding protein SCO1952 from Streptomyces coelicolor (strain ATCC BAA-471 / A3(2) / M145).